A 40-amino-acid chain; its full sequence is Entry-fusion complex protein OPG076 (40 aa).

A helical transmembrane segment spans residues 2-22; that stretch reads LVVIMFFIAFAFCSWLSYSYL. Residues 23 to 40 lie on the Virion surface side of the membrane; sequence RPYISTKELNKSRMFYIT.

It belongs to the orthopoxvirus OPG076 family. Component of the entry fusion complex (EFC) composed of OPG053, OPG076, OPG086, OPG094, OPG095, OPG099, OPG107, OPG143, OPG104, OPG147 and OPG155. Except for OPG095 and OPG053, each of the EFC proteins is required for assembly or stability of the complex. In terms of processing, unglycosylated because produced in viral factories instead of the classic ER -Golgi route.

It localises to the virion membrane. In terms of biological role, component of the entry fusion complex (EFC), which consists of 11 proteins. During cell infection, this complex mediates entry of the virion core into the host cytoplasm by a two-step mechanism consisting of lipid mixing of the viral and cellular membranes and subsequent pore formation. In Variola virus (isolate Human/India/Ind3/1967) (VARV), this protein is Entry-fusion complex protein OPG076 (OPG076).